Here is a 71-residue protein sequence, read N- to C-terminus: Beta-defensin 124 (71 aa).

The signal sequence occupies residues 1-22 (MTQLLLFLVALLVLGHVPSGRS). Intrachain disulfides connect cysteine 27/cysteine 54, cysteine 34/cysteine 48, and cysteine 38/cysteine 55.

The protein belongs to the beta-defensin family.

It localises to the secreted. In terms of biological role, has antibacterial activity. The chain is Beta-defensin 124 (DEFB124) from Homo sapiens (Human).